Consider the following 546-residue polypeptide: 2-isopropylmalate synthase (546 aa).

The Pyruvate carboxyltransferase domain occupies 8–271 (ILIFDTTLRD…NSFFKRNPDS (264 aa)). 4 residues coordinate Mn(2+): Asp17, His208, His210, and Asn244. Residues 408–546 (QLSLVQVSCG…TNTFLSNNAN (139 aa)) are regulatory domain.

The protein belongs to the alpha-IPM synthase/homocitrate synthase family. LeuA type 1 subfamily. As to quaternary structure, homodimer. It depends on Mn(2+) as a cofactor.

The protein localises to the cytoplasm. It carries out the reaction 3-methyl-2-oxobutanoate + acetyl-CoA + H2O = (2S)-2-isopropylmalate + CoA + H(+). Its pathway is amino-acid biosynthesis; L-leucine biosynthesis; L-leucine from 3-methyl-2-oxobutanoate: step 1/4. In terms of biological role, catalyzes the condensation of the acetyl group of acetyl-CoA with 3-methyl-2-oxobutanoate (2-ketoisovalerate) to form 3-carboxy-3-hydroxy-4-methylpentanoate (2-isopropylmalate). The protein is 2-isopropylmalate synthase of Prochlorococcus marinus (strain AS9601).